A 1035-amino-acid chain; its full sequence is Tyrosine-protein kinase-like otk (1035 aa).

A signal peptide spans 1 to 23 (MDMDVMMISMCILASTLMAPGWA). 5 Ig-like C2-type domains span residues 24-109 (STSG…REAS), 110-199 (PPAK…RVMS), 251-365 (PEDL…APLN), 368-464 (PGLL…VSIN), and 469-559 (PKFS…VQLV). The Extracellular segment spans residues 24–582 (STSGFLRVPQ…GGDGFLVTRA (559 aa)). Cystine bridges form between Cys-47–Cys-96, Cys-138–Cys-188, Cys-276–Cys-354, Cys-399–Cys-448, and Cys-491–Cys-543. 6 N-linked (GlcNAc...) asparagine glycosylation sites follow: Asn-336, Asn-418, Asn-430, Asn-445, Asn-513, and Asn-525. Residues 583–603 (VLITMTVALAYIVLVVGLMLW) form a helical membrane-spanning segment. The Cytoplasmic portion of the chain corresponds to 604-1035 (CRYRRQARKA…SKAMQSVAEK (432 aa)). Disordered regions lie at residues 623–683 (AGGD…KSVY) and 721–775 (AQSD…KEEE). A compositionally biased stretch (polar residues) spans 658-676 (KSNGDAQKSDDTACSQQSR). Residue Ser-681 is modified to Phosphoserine. The region spanning 693–1029 (LSELLQIGRG…QLGSALSKAM (337 aa)) is the Protein kinase; inactive domain. The segment covering 723–734 (SDKDADTEKQHS) has biased composition (basic and acidic residues). The segment covering 766–775 (DDIEEIKEEE) has biased composition (acidic residues).

Belongs to the protein kinase superfamily. Tyr protein kinase family. Insulin receptor subfamily. As to quaternary structure, interacts with plexA; component of a receptor complex that mediates the repulsive signaling in response to Semaphorin ligands.

The protein localises to the cell membrane. Acts as a calcium-dependent, homophilic cell adhesion molecule that regulates neural recognition during the development of the nervous system. Component of the repulsive Plexin signaling response to regulate motor axon guidance at the embryonic stage. Also component of a receptor complex that is required in the adult visual system to innervate the lamina layer; specific targeting of R1-R6 axons. The sequence is that of Tyrosine-protein kinase-like otk from Drosophila persimilis (Fruit fly).